A 201-amino-acid chain; its full sequence is Large ribosomal subunit protein uL4 (201 aa).

The segment at 42 to 67 (GNSAQKTRSEVSGGGKKPWNQKGTGR) is disordered.

This sequence belongs to the universal ribosomal protein uL4 family. Part of the 50S ribosomal subunit.

Functionally, one of the primary rRNA binding proteins, this protein initially binds near the 5'-end of the 23S rRNA. It is important during the early stages of 50S assembly. It makes multiple contacts with different domains of the 23S rRNA in the assembled 50S subunit and ribosome. Its function is as follows. Forms part of the polypeptide exit tunnel. This is Large ribosomal subunit protein uL4 from Legionella pneumophila (strain Paris).